Here is a 588-residue protein sequence, read N- to C-terminus: Complement component C8 beta chain (588 aa).

The N-terminal stretch at 1–30 (MFRVAIPRSALNLHSCLLHVTLSLVLISKA) is a signal peptide. Positions 31–46 (AITTAGNEDSDVREAR) are excised as a propeptide. Residues 58–113 (DCVISDWSAWSRCDTCQKKRYRYAKLDQPSQFGGEPCHFHDMEDEACDVPDRYTCD) form the TSP type-1 1 domain. 7 disulfides stabilise this stretch: Cys-59–Cys-94, Cys-70–Cys-104, Cys-73–Cys-112, Cys-118–Cys-129, Cys-123–Cys-142, Cys-136–Cys-151, and Cys-158–Cys-196. 2 C-linked (Man) tryptophan glycosylation sites follow: Trp-64 and Trp-67. Residues 115–152 (IPLCEGFLCTQTGRCIHRTLQCNGEDDCGDMSDEVGCK) enclose the LDL-receptor class A domain. 6 residues coordinate Ca(2+): Leu-134, Asn-137, Glu-139, Asp-141, Asp-147, and Glu-148. Positions 154-500 (VPKPCRQEAE…EYLAESSSCR (347 aa)) constitute an MACPF domain. The next 4 beta stranded transmembrane spans lie at 248–255 (TIVSIGFA), 258–265 (GIAEFGFN), 375–382 (TQAGLKIG), and 388–395 (VYVSAGIE). Disulfide bonds link Cys-374–Cys-399, Cys-499–Cys-547, Cys-501–Cys-517, Cys-504–Cys-519, and Cys-521–Cys-530. The EGF-like domain maps to 501 to 531 (CAPCHNNGVAVLRGTRCDCVCPTGYTGRGCE). Positions 542–588 (DGSWSCWGAWSSCSGRKMSRSRQCNNPVPSDGGLACRGLQQESTDCF) constitute a TSP type-1 2 domain. Residues Trp-548 and Trp-551 are each glycosylated (C-linked (Man) tryptophan). Residues Cys-554 and Cys-587 are joined by a disulfide bond.

Belongs to the complement C6/C7/C8/C9 family. As to quaternary structure, heterotrimer of 3 chains: alpha (C8A), beta (C8B) and gamma (C8G); the alpha and gamma chains are disulfide bonded. Component of the membrane attack complex (MAC), composed of complement C5b, C6, C7, C8A, C8B, C8G and multiple copies of the pore-forming subunit C9.

It is found in the secreted. Its subcellular location is the target cell membrane. Functionally, component of the membrane attack complex (MAC), a multiprotein complex activated by the complement cascade, which inserts into a target cell membrane and forms a pore, leading to target cell membrane rupture and cell lysis. The MAC is initiated by proteolytic cleavage of C5 into complement C5b in response to the classical, alternative, lectin and GZMK complement pathways. The complement pathways consist in a cascade of proteins that leads to phagocytosis and breakdown of pathogens and signaling that strengthens the adaptive immune system. C8B, together with C8A and C8G, inserts into the target membrane, but does not form pores by itself. During MAC assembly, associates with C5b, C6 and C7 to form the C5b8 intermediate complex that inserts into the target membrane and traverses the bilayer increasing membrane rigidity. The polypeptide is Complement component C8 beta chain (c8b) (Paralichthys olivaceus (Bastard halibut)).